Reading from the N-terminus, the 479-residue chain is Ribulose bisphosphate carboxylase large chain (479 aa).

Positions M1–S2 are excised as a propeptide. Positions 123 and 173 each coordinate substrate. Catalysis depends on K175, which acts as the Proton acceptor. K177 contacts substrate. Positions 201, 203, and 204 each coordinate Mg(2+). K201 bears the N6-carboxylysine mark. S208 is modified (phosphoserine). H294 acts as the Proton acceptor in catalysis. Substrate-binding residues include R295 and H327. T330 is subject to Phosphothreonine. S379 serves as a coordination point for substrate.

This sequence belongs to the RuBisCO large chain family. Type I subfamily. In terms of assembly, heterohexadecamer of 8 large chains and 8 small chains; disulfide-linked. The disulfide link is formed within the large subunit homodimers. Mg(2+) serves as cofactor. In terms of processing, the disulfide bond which can form in the large chain dimeric partners within the hexadecamer appears to be associated with oxidative stress and protein turnover.

It is found in the plastid. The protein resides in the chloroplast. The enzyme catalyses 2 (2R)-3-phosphoglycerate + 2 H(+) = D-ribulose 1,5-bisphosphate + CO2 + H2O. The catalysed reaction is D-ribulose 1,5-bisphosphate + O2 = 2-phosphoglycolate + (2R)-3-phosphoglycerate + 2 H(+). Its function is as follows. RuBisCO catalyzes two reactions: the carboxylation of D-ribulose 1,5-bisphosphate, the primary event in carbon dioxide fixation, as well as the oxidative fragmentation of the pentose substrate in the photorespiration process. Both reactions occur simultaneously and in competition at the same active site. This is Ribulose bisphosphate carboxylase large chain from Barbarea verna (Land cress).